Consider the following 134-residue polypeptide: uncharacterized protein (134 aa).

Transmembrane regions (helical) follow at residues 16-36 and 43-63; these read IFSF…NTKL and IAYF…IHGT.

The protein belongs to the plectrovirus ORF5 family.

It is found in the host membrane. This is an uncharacterized protein from Spiroplasma citri (SpV1).